Here is a 422-residue protein sequence, read N- to C-terminus: O-methyltransferase kk1A (422 aa).

An S-adenosyl-L-methionine-binding site is contributed by Asp277. The active-site Proton acceptor is the His320.

Belongs to the class I-like SAM-binding methyltransferase superfamily. Cation-independent O-methyltransferase family.

Its pathway is secondary metabolite biosynthesis. In terms of biological role, O-methyltransferase; part of the gene cluster that mediates the biosynthesis of KK-1, a novel cyclic depsipeptide with 10 residues which is a promising active compound with high activity against many plant pathogens, especially Botrytis cinerea. Within the pathway, kk1A is responsible for the O-methylation of tyrosine as a free amino acid before its activation as an aminoacyl-AMP by the corresponding A domain of kk1B. The nonribosomal peptide synthetase (NRPS) kk1B catalyzes the elongation and cyclization of the decapeptide chain composed of 1 D-lactic acid residue (D-Lac), 1 pipecolic acid residue (Pip), 1 aspartic acid residue (Asp), 1 isoleucine residue (Ile), 1 glycine residue (Gly), 1 tyrosine residue (Tyr) and 4 valine residues (Val). The Asp, Ile and 3 Val residues are N-methylated by the 5 methyltransferase domains from the NRPS (found in modules 3, 5, 6, 7 and 9), whereas the Tyr residue is O-methylated by the cluster encoded O-methyltransferase kk1A. The thioesterase kk1J is likely to be involved in the corrective mechanism of peptide chain synthesis. The D-lactate dehydrogenase kk1H is involved in the synthesis of D-lactic acid from pyruvic acid, which is recognized by the A domain of the first kk1B module. The pyrroline-5-carboxylate reductase kk1I is involved in the synthesis of the L-pipecolic acid residue of KK-1 from delta-1-pyrroline-5-carboxylate (P5C), a metabolic intermediate of lysine. It is still unclear how kk1C and kk1D are involved in the production of KK-1. The polypeptide is O-methyltransferase kk1A (Curvularia clavata).